The chain runs to 74 residues: MKKITPKSFEEALSRLESLTQSMQGEMPLEDALAAYQEGNELVRYCQTKLAQVEQKLQVLDADGPKELNLESDE.

This sequence belongs to the XseB family. In terms of assembly, heterooligomer composed of large and small subunits.

The protein localises to the cytoplasm. The catalysed reaction is Exonucleolytic cleavage in either 5'- to 3'- or 3'- to 5'-direction to yield nucleoside 5'-phosphates.. In terms of biological role, bidirectionally degrades single-stranded DNA into large acid-insoluble oligonucleotides, which are then degraded further into small acid-soluble oligonucleotides. This chain is Exodeoxyribonuclease 7 small subunit, found in Neisseria meningitidis serogroup C / serotype 2a (strain ATCC 700532 / DSM 15464 / FAM18).